A 275-amino-acid polypeptide reads, in one-letter code: Translation initiation factor 2 subunit alpha (275 aa).

Residues 12 to 83 enclose the S1 motif domain; the sequence is GEFVVATVKR…RKGHIDLSLR (72 aa).

This sequence belongs to the eIF-2-alpha family. Heterotrimer composed of an alpha, a beta and a gamma chain.

Functionally, eIF-2 functions in the early steps of protein synthesis by forming a ternary complex with GTP and initiator tRNA. The sequence is that of Translation initiation factor 2 subunit alpha (eif2a) from Pyrococcus horikoshii (strain ATCC 700860 / DSM 12428 / JCM 9974 / NBRC 100139 / OT-3).